A 108-amino-acid polypeptide reads, in one-letter code: Tetrahydromethanopterin S-methyltransferase subunit B (108 aa).

Residues 80–100 (AFYGIVVGLAFSGLLALIIFI) form a helical membrane-spanning segment.

Belongs to the MtrB family. The complex is composed of 8 subunits; MtrA, MtrB, MtrC, MtrD, MtrE, MtrF, MtrG and MtrH.

The protein localises to the cell membrane. It catalyses the reaction 5-methyl-5,6,7,8-tetrahydromethanopterin + coenzyme M + 2 Na(+)(in) = 5,6,7,8-tetrahydromethanopterin + methyl-coenzyme M + 2 Na(+)(out). It functions in the pathway one-carbon metabolism; methanogenesis from CO(2); methyl-coenzyme M from 5,10-methylene-5,6,7,8-tetrahydromethanopterin: step 2/2. Part of a complex that catalyzes the formation of methyl-coenzyme M and tetrahydromethanopterin from coenzyme M and methyl-tetrahydromethanopterin. This is an energy-conserving, sodium-ion translocating step. This is Tetrahydromethanopterin S-methyltransferase subunit B from Methanosarcina acetivorans (strain ATCC 35395 / DSM 2834 / JCM 12185 / C2A).